Consider the following 353-residue polypeptide: Uroporphyrinogen decarboxylase (353 aa).

Substrate-binding positions include Arg29–Arg33, Asp79, Tyr156, Thr211, and His329.

This sequence belongs to the uroporphyrinogen decarboxylase family. Homodimer.

The protein resides in the cytoplasm. It carries out the reaction uroporphyrinogen III + 4 H(+) = coproporphyrinogen III + 4 CO2. It participates in porphyrin-containing compound metabolism; protoporphyrin-IX biosynthesis; coproporphyrinogen-III from 5-aminolevulinate: step 4/4. Functionally, catalyzes the decarboxylation of four acetate groups of uroporphyrinogen-III to yield coproporphyrinogen-III. The sequence is that of Uroporphyrinogen decarboxylase from Alcanivorax borkumensis (strain ATCC 700651 / DSM 11573 / NCIMB 13689 / SK2).